The following is a 339-amino-acid chain: Heat-inducible transcription repressor HrcA (339 aa).

The protein belongs to the HrcA family.

Negative regulator of class I heat shock genes (grpE-dnaK-dnaJ and groELS operons). Prevents heat-shock induction of these operons. This is Heat-inducible transcription repressor HrcA from Acidothermus cellulolyticus (strain ATCC 43068 / DSM 8971 / 11B).